An 808-amino-acid chain; its full sequence is Sucrose synthase isoform 1 (808 aa).

Residues 277 to 754 (MVFNVVILSP…GLKRIQEKYT (478 aa)) are GT-B glycosyltransferase.

Belongs to the glycosyltransferase 1 family. Plant sucrose synthase subfamily. Homotetramer. As to expression, expressed in stems, in roots at different developmental stages, and in flower buds, flowers and maturing seeds, with the highest levels in strong utilization sinks for sucrose such as growing stems and tap root tips.

The enzyme catalyses an NDP-alpha-D-glucose + D-fructose = a ribonucleoside 5'-diphosphate + sucrose + H(+). With respect to regulation, fructose acts as a non-competitive inhibitor with an inhibition constant of 17.2 mM. In contrast, glucose inhibits uncompetitively with an inhibition constant of 4.3 mM. Its function is as follows. Sucrose-cleaving enzyme that provides UDP-glucose and fructose for various metabolic pathways. The protein is Sucrose synthase isoform 1 of Daucus carota (Wild carrot).